The following is a 443-amino-acid chain: Endothelin receptor type B (443 aa).

The signal sequence occupies residues 1-26 (MQPLRSLCGRALVALIFACGVAGVQS). Residues 27-102 (EERGFPPAGA…GPIEIKDTFK (76 aa)) lie on the Extracellular side of the membrane. Residues 53–89 (TFWPRGSNASLPRSSSPPQMPKGGRMAGPPARTLTPP) form a disordered region. Positions 59 to 69 (SNASLPRSSSP) are enriched in polar residues. A glycan (N-linked (GlcNAc...) asparagine) is linked at N60. The chain crosses the membrane as a helical span at residues 103 to 127 (YINTVVSCLVFVLGIIGNSTLLRII). The Cytoplasmic segment spans residues 128–138 (YKNKCMRNGPN). The chain crosses the membrane as a helical span at residues 139 to 164 (ILIASLALGDLLHIIIDIPINVYKLL). Residues 165–176 (AEDWPFGVEMCK) are Extracellular-facing. Residues C175 and C256 are joined by a disulfide bond. Residues 177–198 (LVPFIQKASVGITVLSLCALSI) form a helical membrane-spanning segment. The Cytoplasmic portion of the chain corresponds to 199-219 (DRYRAVASWSRIKGIGVPKWT). The chain crosses the membrane as a helical span at residues 220 to 244 (AVEIVLIWVVSVVLAVPEALGFDMI). Over 245–272 (TTDYKGNRLRICLLHPTQKTAFMQFYKT) the chain is Extracellular. Residues 273-297 (AKDWWLFSFYFCLPLAITAFFYTLM) form a helical membrane-spanning segment. The Cytoplasmic segment spans residues 298-325 (TCEMLRKKSGMQIALNDHLKQRREVAKT). Residue S306 is modified to Phosphoserine. A helical transmembrane segment spans residues 326-351 (VFCLVLVFALCWLPLHLSRILKLTLY). Over 352 to 363 (DQNDSNRCELLS) the chain is Extracellular. An N-linked (GlcNAc...) asparagine glycan is attached at N354. Residues 364-390 (FLLVLDYIGINMASLNSCINPIALYLV) traverse the membrane as a helical segment. The Cytoplasmic portion of the chain corresponds to 391–443 (SKRFKNCFKSCLCCWCQSFEEKQSLEEKQSCLKFKANDHGYDNFRSSNKYSSS). S-palmitoyl cysteine attachment occurs at residues C403, C404, and C406. S420 bears the Phosphoserine mark. At Y440 the chain carries Phosphotyrosine. 3 positions are modified to phosphoserine: S441, S442, and S443.

It belongs to the G-protein coupled receptor 1 family. Endothelin receptor subfamily. EDNRB sub-subfamily.

It is found in the cell membrane. Non-specific receptor for endothelin 1, 2, and 3. Mediates its action by association with G proteins that activate a phosphatidylinositol-calcium second messenger system. The protein is Endothelin receptor type B (EDNRB) of Sus scrofa (Pig).